We begin with the raw amino-acid sequence, 305 residues long: D-alanine--D-alanine ligase (305 aa).

One can recognise an ATP-grasp domain in the interval K99 to N300. N126–T181 contacts ATP.

Belongs to the D-alanine--D-alanine ligase family.

The protein resides in the cytoplasm. The catalysed reaction is 2 D-alanine + ATP = D-alanyl-D-alanine + ADP + phosphate + H(+). It participates in cell wall biogenesis; peptidoglycan biosynthesis. Functionally, cell wall formation. In Halalkalibacterium halodurans (strain ATCC BAA-125 / DSM 18197 / FERM 7344 / JCM 9153 / C-125) (Bacillus halodurans), this protein is D-alanine--D-alanine ligase.